Consider the following 1081-residue polypeptide: Inversin (1081 aa).

ANK repeat units lie at residues 13 to 42 (SLAS…ALKD), 47 to 76 (FGRT…DVNK), 80 to 110 (SQRT…WMQK), 113 to 144 (EEMT…EVDT), 148 to 177 (NKQT…NIGI), 181 to 213 (EGKI…TESL), 220 to 250 (EGRT…NITS), 254 to 283 (LFRT…SGTI), 288 to 317 (QGAT…VKDD), 321 to 350 (EGRT…DIDI), 356 to 385 (YGGT…QVDA), 389 to 418 (MKHT…RVDL), 422 to 451 (DGHS…NPNV), 455 to 484 (AGRT…DPNI), 488 to 517 (EGRT…FPNQ), and 523 to 553 (ERYT…SIAA). 3-hydroxyasparagine is present on Asn-75. The D-box 1 motif lies at 490–498 (RTALHWSCN). The region spanning 555–584 (QDIAAFKIQAVYKGYKVRKAFRDRKNLLMK) is the IQ 1 domain. Positions 589–610 (RKDAAAKKREEENKRREAEQQK) are enriched in basic and acidic residues. Residues 589-889 (RKDAAAKKRE…PAPGPLSGQS (301 aa)) are disordered. Residues 638-649 (RAPSKQPPSSEA) show a composition bias toward polar residues. Composition is skewed to basic and acidic residues over residues 688 to 698 (KPNESPREQCK), 724 to 740 (EKSR…DKGK), and 772 to 785 (DGHR…DTAS). Positions 863 to 872 (SGTSTLSEDA) are enriched in polar residues. A D-box 2 motif is present at residues 910–918 (RKELFRKKN). The 30-residue stretch at 917–946 (KNKAAAVIQRAWRSYQLRKHLSHLLHMKEL) folds into the IQ 2 domain. An ANK 17 repeat occupies 1022–1050 (RTHSVLHLNSVSNLQCIHLLENSGRSKNF). The segment covering 1051 to 1061 (SYNLQSATPPK) has biased composition (polar residues). The tract at residues 1051–1081 (SYNLQSATPPKTKTKLRPSLEEECVRGSWNS) is disordered.

In terms of assembly, binds calmodulin via its IQ domains. Interacts with APC2. Interacts with alpha-, beta-, and gamma-catenin. Interacts with N-cadherin (CDH2). Interacts with NPHP1. Interacts with DVL1, PRICKLE (PRICKLE1 or PRICKLE2) and Strabismus (VANGL1 or VANGL2). Component of a complex containing at least ANKS6, INVS, NEK8 and NPHP3. ANKS6 may organize complex assembly by linking INVS and NPHP3 to NEK8 and INVS may target the complex to the proximal ciliary axoneme. Interacts with IQCB1; the interaction likely requires additional interactors. Interacts with microtubules. May be ubiquitinated via its interaction with APC2. Post-translationally, hydroxylated at Asn-75, most probably by HIF1AN.

It localises to the cytoplasm. It is found in the cytoskeleton. The protein localises to the membrane. Its subcellular location is the spindle. The protein resides in the nucleus. Required for normal renal development and establishment of left-right axis. Probably acts as a molecular switch between different Wnt signaling pathways. Inhibits the canonical Wnt pathway by targeting cytoplasmic disheveled (DVL1) for degradation by the ubiquitin-proteasome. This suggests that it is required in renal development to oppose the repression of terminal differentiation of tubular epithelial cells by Wnt signaling. Involved in the organization of apical junctions in kidney cells together with NPHP1, NPHP4 and RPGRIP1L/NPHP8. Does not seem to be strictly required for ciliogenesis. The polypeptide is Inversin (INVS) (Canis lupus familiaris (Dog)).